A 362-amino-acid polypeptide reads, in one-letter code: MSVMRNNWTKEEIIAIYNKPLMDLLYEAASIHREYHDPNVVQVSTLLSIKTGGCPEDCGYCPQAARYHTDIEGNDLMSVQQVKAQALRAKSSGSSRVCMGAAWRNVKDGPEFDQVLEMVRTINKLDMEVCCTLGMITENQAHRLAEAGLYAYNHNLDTSEEYYKEVISTRGFEDRIETIANVRKTNVTVCSGGIIGMGESIGDRAGMLVALSTLSPQPESVPINALVAVEGTPMEEEKPVEIWEMIRMVATTRIIMPETQVRLSAGRMNMTREGQAMCFFAGANSIFAGDKLLTTPNPDVNEDMKMFEMLGLNPQKPFTKVSQPTTVEAKDSRYESLGEKPKWSRPSHTIEKNLELSGKGKN.

One can recognise a Radical SAM core domain in the interval 39-267 (NVVQVSTLLS…ETQVRLSAGR (229 aa)). [4Fe-4S] cluster-binding residues include Cys-54, Cys-58, and Cys-61. Positions 98, 130, 190, and 262 each coordinate [2Fe-2S] cluster. The disordered stretch occupies residues 317 to 362 (PFTKVSQPTTVEAKDSRYESLGEKPKWSRPSHTIEKNLELSGKGKN). Basic and acidic residues predominate over residues 328–354 (EAKDSRYESLGEKPKWSRPSHTIEKNL).

The protein belongs to the radical SAM superfamily. Biotin synthase family. As to quaternary structure, homodimer. [4Fe-4S] cluster is required as a cofactor. [2Fe-2S] cluster serves as cofactor.

The enzyme catalyses (4R,5S)-dethiobiotin + (sulfur carrier)-SH + 2 reduced [2Fe-2S]-[ferredoxin] + 2 S-adenosyl-L-methionine = (sulfur carrier)-H + biotin + 2 5'-deoxyadenosine + 2 L-methionine + 2 oxidized [2Fe-2S]-[ferredoxin]. It functions in the pathway cofactor biosynthesis; biotin biosynthesis; biotin from 7,8-diaminononanoate: step 2/2. In terms of biological role, catalyzes the conversion of dethiobiotin (DTB) to biotin by the insertion of a sulfur atom into dethiobiotin via a radical-based mechanism. The sequence is that of Biotin synthase from Flavobacterium psychrophilum (strain ATCC 49511 / DSM 21280 / CIP 103535 / JIP02/86).